The sequence spans 242 residues: Ubiquinone biosynthesis O-methyltransferase (242 aa).

S-adenosyl-L-methionine is bound by residues Arg-36, Gly-56, Asp-77, and Met-130.

Belongs to the methyltransferase superfamily. UbiG/COQ3 family.

It carries out the reaction a 3-demethylubiquinol + S-adenosyl-L-methionine = a ubiquinol + S-adenosyl-L-homocysteine + H(+). The catalysed reaction is a 3-(all-trans-polyprenyl)benzene-1,2-diol + S-adenosyl-L-methionine = a 2-methoxy-6-(all-trans-polyprenyl)phenol + S-adenosyl-L-homocysteine + H(+). The protein operates within cofactor biosynthesis; ubiquinone biosynthesis. Its function is as follows. O-methyltransferase that catalyzes the 2 O-methylation steps in the ubiquinone biosynthetic pathway. In Pasteurella multocida (strain Pm70), this protein is Ubiquinone biosynthesis O-methyltransferase.